The sequence spans 742 residues: Polyphosphate kinase (742 aa).

Residue Asn-91 participates in ATP binding. Residues Arg-431 and Arg-461 each coordinate Mg(2+). His-491 serves as the catalytic Phosphohistidine intermediate. 3 residues coordinate ATP: Tyr-524, Arg-624, and His-652. Residues 718-742 (WTASPQEGHSVRDHQESLMERHRSP) are disordered. The segment covering 726–742 (HSVRDHQESLMERHRSP) has biased composition (basic and acidic residues).

This sequence belongs to the polyphosphate kinase 1 (PPK1) family. Mg(2+) is required as a cofactor. An intermediate of this reaction is the autophosphorylated ppk in which a phosphate is covalently linked to a histidine residue through a N-P bond.

The enzyme catalyses [phosphate](n) + ATP = [phosphate](n+1) + ADP. Catalyzes the reversible transfer of the terminal phosphate of ATP to form a long-chain polyphosphate (polyP). The chain is Polyphosphate kinase from Mycobacterium bovis (strain ATCC BAA-935 / AF2122/97).